Reading from the N-terminus, the 209-residue chain is Mitochondrial import inner membrane translocase subunit Tim23 (209 aa).

A run of 3 helical transmembrane segments spans residues 73–93, 125–145, and 180–200; these read FELA…FGAV, ALWA…GVII, and GGLA…WEHI.

The protein belongs to the Tim17/Tim22/Tim23 family. In terms of assembly, component of the TIM23 complex at least composed of timm23, timm17 and timm50. The complex interacts with the timm44 component of the PAM complex.

The protein localises to the mitochondrion inner membrane. Functionally, essential component of the TIM23 complex, a complex that mediates the translocation of transit peptide-containing proteins across the mitochondrial inner membrane. This chain is Mitochondrial import inner membrane translocase subunit Tim23 (timm23), found in Xenopus tropicalis (Western clawed frog).